Here is a 537-residue protein sequence, read N- to C-terminus: Cytochrome bd ubiquinol oxidase subunit 1 (537 aa).

At 1 to 24 the chain is on the cytoplasmic side; the sequence is MISESVVDLSRLQFAMTALYHFLF. Histidine 21 contributes to the heme b binding site. A helical membrane pass occupies residues 25–44; sequence VPLTLGMTFLLAIMESVYVM. Topologically, residues 45–96 are periplasmic; sequence TGKQVYKDMVKFWGKLFGINFALGVTTGITMEFQFGTNWAYYSHYVGDIFGA. The chain crosses the membrane as a helical span at residues 97-116; sequence PLAIEGLTAFFLESTFIGMF. Residues 117–131 lie on the Cytoplasmic side of the membrane; it reads FFGWDRLSKIQHLAV. The chain crosses the membrane as a helical span at residues 132–151; the sequence is TWLVALGSNLSALWILVANG. The Periplasmic segment spans residues 152 to 189; sequence WMQHPVGAEFNFETMRMELVDFGALLLNPVAQVKFVHT. Histidine 188 contributes to the heme b binding site. A helical transmembrane segment spans residues 190-209; the sequence is VASGYVTGAVFVLAISSYYL. Residues 210 to 221 are Cytoplasmic-facing; it reads LKKRDLGFARRS. The chain crosses the membrane as a helical span at residues 222 to 241; the sequence is FAIASAFGMASILSVIVLGD. At 242 to 394 the chain is on the periplasmic side; it reads ESGYEVGEVQ…VASMFWSFRA (153 aa). Methionine 395 lines the heme b pocket. Residues 395–414 form a helical membrane-spanning segment; it reads MVGAGFAMLILFVCAFWASA. Residues 415-472 are Cytoplasmic-facing; sequence RKNEESKPWLLKFALYSLPLPWIATQTGWFVAEHGRQPWTIGGVLPTHLSASSLSTGD. The helical transmembrane segment at 473–492 threads the bilayer; it reads LWGSLIALIAFYTLLLVVEM. Topologically, residues 493 to 537 are periplasmic; sequence YLMIRFARLGPSSLHTGRYHFEQLEQHAVKHASPSQADPQQPVNA.

The protein belongs to the cytochrome ubiquinol oxidase subunit 1 family. In terms of assembly, heterodimer of subunits I and II. The cofactor is heme b. Heme d cis-diol is required as a cofactor.

It localises to the cell inner membrane. The catalysed reaction is 2 a ubiquinol + O2(in) + 4 H(+)(in) = 2 a ubiquinone + 2 H2O(in) + 4 H(+)(out). In terms of biological role, may be involved in maintaining the low intracellular oxygen concentration required for nitrogen fixation. This is Cytochrome bd ubiquinol oxidase subunit 1 (cydA) from Azotobacter vinelandii.